We begin with the raw amino-acid sequence, 237 residues long: 5'-methylthioadenosine/S-adenosylhomocysteine nucleosidase (237 aa).

Catalysis depends on Glu-12, which acts as the Proton acceptor. Residues Ala-78, Ile-152, and 173–174 (ME) contribute to the substrate site. Asp-197 functions as the Proton donor in the catalytic mechanism.

Belongs to the PNP/UDP phosphorylase family. MtnN subfamily. Homodimer.

It catalyses the reaction S-adenosyl-L-homocysteine + H2O = S-(5-deoxy-D-ribos-5-yl)-L-homocysteine + adenine. The catalysed reaction is S-methyl-5'-thioadenosine + H2O = 5-(methylsulfanyl)-D-ribose + adenine. The enzyme catalyses 5'-deoxyadenosine + H2O = 5-deoxy-D-ribose + adenine. Its pathway is amino-acid biosynthesis; L-methionine biosynthesis via salvage pathway; S-methyl-5-thio-alpha-D-ribose 1-phosphate from S-methyl-5'-thioadenosine (hydrolase route): step 1/2. Catalyzes the irreversible cleavage of the glycosidic bond in both 5'-methylthioadenosine (MTA) and S-adenosylhomocysteine (SAH/AdoHcy) to adenine and the corresponding thioribose, 5'-methylthioribose and S-ribosylhomocysteine, respectively. Also cleaves 5'-deoxyadenosine, a toxic by-product of radical S-adenosylmethionine (SAM) enzymes, into 5-deoxyribose and adenine. Thus, is required for in vivo function of the radical SAM enzymes biotin synthase and lipoic acid synthase, that are inhibited by 5'-deoxyadenosine accumulation. In Hamiltonella defensa subsp. Acyrthosiphon pisum (strain 5AT), this protein is 5'-methylthioadenosine/S-adenosylhomocysteine nucleosidase.